A 203-amino-acid chain; its full sequence is MKLRWFAFLIVLLAGCSSKHDYTNPPWNAKVPVQRAMQWMPISQKAGAAWGVDPQLITAIIAIESGGNPNAVSKSNAIGLMQIKASTSGRDVYRRMGWSGEPTTSELKNPERNISMGAAYLNILETGPLAGIEDPKVLQYALVVSYANGAGALLRTFSSDRKKAISKINDLDADEFLEHVARNHPAPQAPRYIYKLEQALDAM.

Positions Met1–Gly15 are cleaved as a signal peptide. The N-palmitoyl cysteine moiety is linked to residue Cys16. A lipid anchor (S-diacylglycerol cysteine) is attached at Cys16.

This sequence belongs to the transglycosylase Slt family.

The protein localises to the cell outer membrane. The enzyme catalyses Endolytic cleavage of the (1-&gt;4)-beta-glycosidic linkage between N-acetylmuramic acid (MurNAc) and N-acetylglucosamine (GlcNAc) residues in peptidoglycan with concomitant formation of a 1,6-anhydrobond in the MurNAc residue.. Functionally, murein-degrading enzyme. May play a role in recycling of muropeptides during cell elongation and/or cell division. Preferentially cleaves at a distance of more than two disaccharide units from the ends of the glycan chain. This is Endo-type membrane-bound lytic murein transglycosylase A from Escherichia coli O127:H6 (strain E2348/69 / EPEC).